The chain runs to 77 residues: U8-lycotoxin-Ls1h (77 aa).

The N-terminal stretch at 1-20 is a signal peptide; sequence MKLIIFTGLVLFAIVSLIEV. Residues 21-26 constitute a propeptide that is removed on maturation; it reads QADNER.

The protein belongs to the neurotoxin 19 (CSTX) family. 08 (U8-Lctx) subfamily. In terms of processing, contains 4 disulfide bonds. Expressed by the venom gland.

It localises to the secreted. The chain is U8-lycotoxin-Ls1h from Lycosa singoriensis (Wolf spider).